We begin with the raw amino-acid sequence, 465 residues long: Ribulose bisphosphate carboxylase large chain (465 aa).

Lysine 4 is subject to N6,N6,N6-trimethyllysine. Residues asparagine 113 and threonine 163 each coordinate substrate. Lysine 165 serves as the catalytic Proton acceptor. Lysine 167 contacts substrate. Residues lysine 191, aspartate 193, and glutamate 194 each contribute to the Mg(2+) site. Lysine 191 carries the post-translational modification N6-carboxylysine. Histidine 284 serves as the catalytic Proton acceptor. Positions 285, 317, and 369 each coordinate substrate.

It belongs to the RuBisCO large chain family. Type I subfamily. In terms of assembly, heterohexadecamer of 8 large chains and 8 small chains; disulfide-linked. The disulfide link is formed within the large subunit homodimers. It depends on Mg(2+) as a cofactor. The disulfide bond which can form in the large chain dimeric partners within the hexadecamer appears to be associated with oxidative stress and protein turnover.

The protein localises to the plastid. The protein resides in the chloroplast. It carries out the reaction 2 (2R)-3-phosphoglycerate + 2 H(+) = D-ribulose 1,5-bisphosphate + CO2 + H2O. It catalyses the reaction D-ribulose 1,5-bisphosphate + O2 = 2-phosphoglycolate + (2R)-3-phosphoglycerate + 2 H(+). In terms of biological role, ruBisCO catalyzes two reactions: the carboxylation of D-ribulose 1,5-bisphosphate, the primary event in carbon dioxide fixation, as well as the oxidative fragmentation of the pentose substrate in the photorespiration process. Both reactions occur simultaneously and in competition at the same active site. In Senega cruciata (Cross-leaved milkwort), this protein is Ribulose bisphosphate carboxylase large chain.